The primary structure comprises 158 residues: MRIGHGVDVHKLVKGEDLVLGGVQIPSDLGLKGHSDADVLIHAIMDAMLGSLALGDIGKHFPDDDPRYHQIDSKVLLKKTYQLITSYGYQLINLDSTIMAEKPKLAPYIDEMRITISDVLDLYPSQIGIKATTFEKLGFVGSGQGIMAQAVVLMERLY.

The a divalent metal cation site is built by aspartate 8 and histidine 10. 4-CDP-2-C-methyl-D-erythritol 2-phosphate contacts are provided by residues 8 to 10 (DVH) and 34 to 35 (HS). Histidine 42 is an a divalent metal cation binding site. Residues 56–58 (DIG), 61–65 (FPDDD), 132–135 (TTFE), and phenylalanine 139 contribute to the 4-CDP-2-C-methyl-D-erythritol 2-phosphate site.

This sequence belongs to the IspF family. As to quaternary structure, homotrimer. A divalent metal cation is required as a cofactor.

The enzyme catalyses 4-CDP-2-C-methyl-D-erythritol 2-phosphate = 2-C-methyl-D-erythritol 2,4-cyclic diphosphate + CMP. Its pathway is isoprenoid biosynthesis; isopentenyl diphosphate biosynthesis via DXP pathway; isopentenyl diphosphate from 1-deoxy-D-xylulose 5-phosphate: step 4/6. Its function is as follows. Involved in the biosynthesis of isopentenyl diphosphate (IPP) and dimethylallyl diphosphate (DMAPP), two major building blocks of isoprenoid compounds. Catalyzes the conversion of 4-diphosphocytidyl-2-C-methyl-D-erythritol 2-phosphate (CDP-ME2P) to 2-C-methyl-D-erythritol 2,4-cyclodiphosphate (ME-CPP) with a corresponding release of cytidine 5-monophosphate (CMP). The protein is 2-C-methyl-D-erythritol 2,4-cyclodiphosphate synthase of Natranaerobius thermophilus (strain ATCC BAA-1301 / DSM 18059 / JW/NM-WN-LF).